Reading from the N-terminus, the 144-residue chain is Large ribosomal subunit protein uL16 (144 aa).

Residues 1–16 are compositionally biased toward basic residues; that stretch reads MLTPKRVKHRKQHRGK. A disordered region spans residues 1 to 22; that stretch reads MLTPKRVKHRKQHRGKMAGNAK.

Belongs to the universal ribosomal protein uL16 family. As to quaternary structure, part of the 50S ribosomal subunit.

Binds 23S rRNA and is also seen to make contacts with the A and possibly P site tRNAs. The sequence is that of Large ribosomal subunit protein uL16 from Brevibacillus brevis (strain 47 / JCM 6285 / NBRC 100599).